The sequence spans 56 residues: Botcinic acid biosynthesis cluster B protein 14 (56 aa).

It functions in the pathway polyketide biosynthesis. In terms of biological role, part of the gene cluster B that mediates the biosynthesis of botcinic acid and its botcinin derivatives, acetate-derived polyketides that contribute to virulence when combined with the sesquiterpene botrydial. Botcinic acid and its derivatives have been shown to induce chlorosis and necrosis during host plant infection, but also have antifungal activities. Two polyketide synthases, BOA6 and BOA9, are involved in the biosynthesis of botcinins. BOA6 mediates the formation of the per-methylated tetraketide core by condensation of four units of malonyl-CoA with one unit of acetyl-CoA, which would be methylated in activated methylene groups to yield a bicyclic acid intermediate that could then either be converted to botrylactone derivatives or lose the starter acetate unit through a retro-Claisen type C-C bond cleavage to yield botcinin derivatives. The second polyketide synthase, BOA9, is probably required for the biosynthesis of the tetraketide side chain of botcinins. The methyltransferase (MT) domain within BOA6 is probably responsible for the incorporation of four methyl groups. The trans-enoyl reductase BOA5 might take over the enoyl reductase function of BOA6 that misses an ER domain. The monooxygenases BOA2, BOA3 and BOA4 might be involved in further hydroxylations at C4, C5 and C8, whereas BOA7, close to BOA9, could potentially be involved in the hydroxylation at C4 in the side chain of botcinins. The protein is Botcinic acid biosynthesis cluster B protein 14 of Botryotinia fuckeliana (strain B05.10) (Noble rot fungus).